The chain runs to 406 residues: tRNA-specific 2-thiouridylase MnmA (406 aa).

Residues 42–49 and L68 each bind ATP; that span reads GLSGGVDS. Residue C129 is the Nucleophile of the active site. Residues C129 and C237 are joined by a disulfide bond. An ATP-binding site is contributed by G154. The interaction with tRNA stretch occupies residues 187 to 189; it reads KDQ. The active-site Cysteine persulfide intermediate is the C237. The tract at residues 342–343 is interaction with tRNA; sequence RY.

It belongs to the MnmA/TRMU family.

The protein localises to the cytoplasm. It carries out the reaction S-sulfanyl-L-cysteinyl-[protein] + uridine(34) in tRNA + AH2 + ATP = 2-thiouridine(34) in tRNA + L-cysteinyl-[protein] + A + AMP + diphosphate + H(+). Functionally, catalyzes the 2-thiolation of uridine at the wobble position (U34) of tRNA, leading to the formation of s(2)U34. This Prochlorococcus marinus (strain MIT 9211) protein is tRNA-specific 2-thiouridylase MnmA.